A 335-amino-acid chain; its full sequence is Adenosine deaminase (335 aa).

Zn(2+) contacts are provided by H12 and H14. Substrate contacts are provided by H14 and D16. Zn(2+) is bound at residue H197. E200 functions as the Proton donor in the catalytic mechanism. D278 contributes to the Zn(2+) binding site.

Belongs to the metallo-dependent hydrolases superfamily. Adenosine and AMP deaminases family. Adenosine deaminase subfamily. It depends on Zn(2+) as a cofactor.

The enzyme catalyses adenosine + H2O + H(+) = inosine + NH4(+). The catalysed reaction is 2'-deoxyadenosine + H2O + H(+) = 2'-deoxyinosine + NH4(+). Catalyzes the hydrolytic deamination of adenosine and 2-deoxyadenosine. The chain is Adenosine deaminase from Clostridium botulinum (strain Loch Maree / Type A3).